The chain runs to 171 residues: Large ribosomal subunit protein uL10 (171 aa).

The protein belongs to the universal ribosomal protein uL10 family. In terms of assembly, part of the ribosomal stalk of the 50S ribosomal subunit. The N-terminus interacts with L11 and the large rRNA to form the base of the stalk. The C-terminus forms an elongated spine to which L12 dimers bind in a sequential fashion forming a multimeric L10(L12)X complex.

Functionally, forms part of the ribosomal stalk, playing a central role in the interaction of the ribosome with GTP-bound translation factors. This chain is Large ribosomal subunit protein uL10, found in Paracoccus denitrificans (strain Pd 1222).